The primary structure comprises 185 residues: NADH-quinone oxidoreductase subunit B (185 aa).

[4Fe-4S] cluster is bound by residues C64, C65, C129, and C159.

Belongs to the complex I 20 kDa subunit family. NDH-1 is composed of 14 different subunits. Subunits NuoB, C, D, E, F, and G constitute the peripheral sector of the complex. Requires [4Fe-4S] cluster as cofactor.

It is found in the cell inner membrane. The enzyme catalyses a quinone + NADH + 5 H(+)(in) = a quinol + NAD(+) + 4 H(+)(out). Its function is as follows. NDH-1 shuttles electrons from NADH, via FMN and iron-sulfur (Fe-S) centers, to quinones in the respiratory chain. Couples the redox reaction to proton translocation (for every two electrons transferred, four hydrogen ions are translocated across the cytoplasmic membrane), and thus conserves the redox energy in a proton gradient. This chain is NADH-quinone oxidoreductase subunit B, found in Rhodospirillum rubrum (strain ATCC 11170 / ATH 1.1.1 / DSM 467 / LMG 4362 / NCIMB 8255 / S1).